Consider the following 224-residue polypeptide: UPF0173 metal-dependent hydrolase TTHA1283 (224 aa).

The protein belongs to the UPF0173 family.

This chain is UPF0173 metal-dependent hydrolase TTHA1283, found in Thermus thermophilus (strain ATCC 27634 / DSM 579 / HB8).